Reading from the N-terminus, the 107-residue chain is Conantokin-R (107 aa).

The N-terminal stretch at 1-24 (MQLYTYLYLLVSLVTFYLILGTGT) is a signal peptide. The propeptide occupies 25 to 80 (LGHGGALTERRSTDATALKPEPVLLQKSSARSTDDNGNDRLTQMKRILKKRGNKAR). The interval 26–64 (GHGGALTERRSTDATALKPEPVLLQKSSARSTDDNGNDR) is disordered. A 4-carboxyglutamate mark is found at glutamate 83, glutamate 84, glutamate 91, and glutamate 95. Glutamate 91 and glutamate 95 together coordinate a divalent metal cation. A disulfide bond links cysteine 101 and cysteine 105.

This sequence belongs to the conotoxin B superfamily. Ca(2+) is required as a cofactor. Mg(2+) serves as cofactor. As to expression, expressed by the venom duct.

It localises to the secreted. Its function is as follows. Conantokins inhibit N-methyl-D-aspartate (NMDA) receptors. This toxin is potent in the following order of preference: NR2B approximately NR2A/GRIN2A &gt; NR2C/GRIN2C &gt;&gt; NR2D/GRIN2D. Induces sleep-like symptoms in young mice. Is a highly potent anticonvulsant compound. This chain is Conantokin-R, found in Conus radiatus (Rayed cone).